A 1407-amino-acid polypeptide reads, in one-letter code: DNA-directed RNA polymerase subunit beta' (1407 aa).

4 residues coordinate Zn(2+): Cys70, Cys72, Cys85, and Cys88. Mg(2+) is bound by residues Asp460, Asp462, and Asp464. Zn(2+)-binding residues include Cys814, Cys888, Cys895, and Cys898. Position 972 is an N6-acetyllysine (Lys972).

This sequence belongs to the RNA polymerase beta' chain family. In terms of assembly, the RNAP catalytic core consists of 2 alpha, 1 beta, 1 beta' and 1 omega subunit. When a sigma factor is associated with the core the holoenzyme is formed, which can initiate transcription. It depends on Mg(2+) as a cofactor. Requires Zn(2+) as cofactor.

The enzyme catalyses RNA(n) + a ribonucleoside 5'-triphosphate = RNA(n+1) + diphosphate. Functionally, DNA-dependent RNA polymerase catalyzes the transcription of DNA into RNA using the four ribonucleoside triphosphates as substrates. The sequence is that of DNA-directed RNA polymerase subunit beta' from Escherichia coli (strain SMS-3-5 / SECEC).